Here is a 316-residue protein sequence, read N- to C-terminus: Malate dehydrogenase (316 aa).

NAD(+) contacts are provided by residues 12-17 (GAGNIG) and Asp36. Residues Arg85 and Arg91 each contribute to the substrate site. NAD(+) contacts are provided by residues Asn98 and 121–123 (VTN). 2 residues coordinate substrate: Asn123 and Arg154. The active-site Proton acceptor is His178.

The protein belongs to the LDH/MDH superfamily. MDH type 3 family.

The catalysed reaction is (S)-malate + NAD(+) = oxaloacetate + NADH + H(+). Catalyzes the reversible oxidation of malate to oxaloacetate. The polypeptide is Malate dehydrogenase (Wolbachia pipientis wMel).